The primary structure comprises 613 residues: Epsin-2 (613 aa).

In terms of domain architecture, ENTH spans 11 to 143 (NMMKGYSSTQ…NDEERLREER (133 aa)). Disordered stretches follow at residues 140–208 (REER…DDED), 323–351 (TAANMQQQQQQPADFQQPLPTGSNNPFSM), and 356–375 (RQKQEQQHAQLQRQQEEARQ). Positions 148–167 (RNRRANRAARPRPRRQRTRS) are enriched in basic residues. A Phosphothreonine modification is found at Thr165. Ser167 bears the Phosphoserine mark. UIM domains follow at residues 175–194 (SYQDDLEKALEESRITAQED) and 206–225 (DEDPDFQAALQLSKEEEELK). Basic and acidic residues predominate over residues 179–188 (DLEKALEESR). Over residues 323–339 (TAANMQQQQQQPADFQQ) the composition is skewed to low complexity. Residues 340–350 (PLPTGSNNPFS) are compositionally biased toward polar residues. Lys426 participates in a covalent cross-link: Glycyl lysine isopeptide (Lys-Gly) (interchain with G-Cter in ubiquitin). Thr430 bears the Phosphothreonine mark. Ser434 carries the phosphoserine modification. Phosphothreonine is present on residues Thr450, Thr468, and Thr470. A compositionally biased stretch (polar residues) spans 471 to 512 (GTFINSQGTGYKQVTNEPKNNPFLSNQYTGLPSTNIVPTQTG). Residues 471 to 613 (GTFINSQGTG…PDQGVSLIDL (143 aa)) form a disordered region. The span at 526-600 (SPQQNPTGIS…QQQQQQQQQQ (75 aa)) shows a compositional bias: low complexity.

Belongs to the epsin family. Post-translationally, phosphorylated by PRK1.

It is found in the cytoplasm. The protein localises to the membrane. Functionally, binds to membranes enriched in phosphatidylinositol 3,5-bisphosphate (PtdIns(3,5)P2) and phosphatidylinositol 4,5-bisphosphate (PtdIns(4,5)P2). Required for endocytosis and localization of actin. The chain is Epsin-2 (ENT2) from Saccharomyces cerevisiae (strain ATCC 204508 / S288c) (Baker's yeast).